The chain runs to 233 residues: MILIASPFSLAHLEYLNTWHAHIKNIAQQHGLDIKVAIVISNTHLNNFLPVSTPLNIECITFPGCGIKEIDLLWARIKLFQHYCAIGARLLWLVSADIRPSVSTWPAIADSLKKGADAVVVPYPSRWNNLIPTVIKEIVVRQKKCLVAVDAHHLDTDTQIVGAGMGCIVLTLKALMVRLSIGKQPIKILWPDLHGTAEGIPLEGVEVGWFLNAYAHKLNIRCLGRDYIAQHLN.

It belongs to the asfivirus H233R family.

This is an uncharacterized protein from Ornithodoros (relapsing fever ticks).